A 764-amino-acid polypeptide reads, in one-letter code: Transient receptor potential cation channel subfamily V member 2 (764 aa).

The interval 1 to 46 is disordered; that stretch reads MTSPSSSPVFRLETLDGGQEDGSEADRGKLDFGSGLPPMESQFQGE. Positions 1-388 are required for interaction with SLC50A1; that stretch reads MTSPSSSPVF…LLQAKWDLLI (388 aa). Topologically, residues 1 to 390 are cytoplasmic; it reads MTSPSSSPVF…QAKWDLLIPK (390 aa). Ser6 is modified (phosphoserine). ANK repeat units lie at residues 72 to 114, 115 to 161, 162 to 207, 208 to 243, 244 to 292, and 293 to 319; these read NRFD…TEGS, TGKT…DDYY, RGHS…TCFY, FGEL…ATDS, QGNT…IRNL, and QDLT…REFS. A helical transmembrane segment spans residues 391 to 411; it reads FFLNFLCNLIYMFIFTAVAYH. Over 412–434 the chain is Extracellular; that stretch reads QPTLKKQAAPHLKAEVGNSMLLT. Residues 435–455 traverse the membrane as a helical segment; that stretch reads GHILILLGGIYLLVGQLWYFW. Topologically, residues 456–471 are cytoplasmic; the sequence is RRHVFIWISFIDSYFE. Residues 472–492 traverse the membrane as a helical segment; sequence ILFLFQALLTVVSQVLCFLAI. Residue Glu493 is a topological domain, extracellular. Residues 494–514 traverse the membrane as a helical segment; the sequence is WYLPLLVSALVLGWLNLLYYT. Topologically, residues 515–537 are cytoplasmic; sequence RGFQHTGIYSVMIQKVILRDLLR. A helical transmembrane segment spans residues 538-558; sequence FLLIYLVFLFGFAVALVSLSQ. Residues 562–585 form a disordered region; the sequence is RPEAPTGPNATESVQPMEGQEDEG. An N-linked (GlcNAc...) asparagine glycan is attached at Asn570. The pore-forming intramembrane region spans 572-609; sequence TESVQPMEGQEDEGNGAQYRGILEASLELFKFTIGMGE. A helical transmembrane segment spans residues 622–642; the sequence is VLLLLLAYVLLTYILLLNMLI. The Cytoplasmic portion of the chain corresponds to 643 to 764; sequence ALMSETVNSV…YVPVQLLQSN (122 aa). Residues 725-756 form a disordered region; that stretch reads PSGAGVPRTLENPVLASPPKEDEDGASEENYV. 2 positions are modified to phosphoserine: Ser751 and Ser763.

Belongs to the transient receptor (TC 1.A.4) family. TrpV subfamily. TRPV2 sub-subfamily. As to quaternary structure, homotetramer. Interacts with a cAMP-dependent protein kinase type II regulatory subunit (PRKAR2A or PRKAR2B) and ACBD3. Interacts with SLC50A1; the interaction probably occurs intracellularly and depends on TRPV2 N-glycosylation. Post-translationally, N-glycosylated. Phosphorylated by PKA.

The protein resides in the cell membrane. It localises to the cytoplasm. It is found in the melanosome. It catalyses the reaction Ca(2+)(in) = Ca(2+)(out). The enzyme catalyses Mg(2+)(in) = Mg(2+)(out). The catalysed reaction is Na(+)(in) = Na(+)(out). It carries out the reaction K(+)(in) = K(+)(out). In terms of biological role, calcium-permeable, non-selective cation channel with an outward rectification. Seems to be regulated, at least in part, by IGF1, PDGF and neuropeptide head activator. May transduce physical stimuli in mast cells. Activated by temperatures higher than 52 degrees Celsius; is not activated by vanilloids and acidic pH. The sequence is that of Transient receptor potential cation channel subfamily V member 2 (TRPV2) from Homo sapiens (Human).